Reading from the N-terminus, the 530-residue chain is NAD(+) kinase (530 aa).

Disordered stretches follow at residues 1-27 (MKEN…HNNN), 57-99 (ISSE…KSSN), and 486-530 (SLEA…RFSV). Over residues 13–25 (WVNEEDGRNDHHN) the composition is skewed to basic and acidic residues. A compositionally biased stretch (low complexity) spans 59–75 (SESSSRRSSLLNKDSSL). A compositionally biased stretch (polar residues) spans 88-99 (INGTRGSSKSSN). Phosphoserine is present on residues S499 and S503. The span at 499–508 (SDDESDDESV) shows a compositional bias: acidic residues.

Belongs to the NAD kinase family. As to quaternary structure, homohexamer.

It carries out the reaction NAD(+) + ATP = ADP + NADP(+) + H(+). Functionally, specifically phosphorylates NAD in the presence of ATP, dATP, or CTP as phosphoryl donors. This Saccharomyces cerevisiae (strain ATCC 204508 / S288c) (Baker's yeast) protein is NAD(+) kinase (UTR1).